We begin with the raw amino-acid sequence, 118 residues long: Small ribosomal subunit protein uS13 (118 aa).

The segment at 91 to 118 (HRRGLPVRGQRTKTNARTRKGPRKPIKK) is disordered.

It belongs to the universal ribosomal protein uS13 family. As to quaternary structure, part of the 30S ribosomal subunit. Forms a loose heterodimer with protein S19. Forms two bridges to the 50S subunit in the 70S ribosome.

Located at the top of the head of the 30S subunit, it contacts several helices of the 16S rRNA. In the 70S ribosome it contacts the 23S rRNA (bridge B1a) and protein L5 of the 50S subunit (bridge B1b), connecting the 2 subunits; these bridges are implicated in subunit movement. Contacts the tRNAs in the A and P-sites. The protein is Small ribosomal subunit protein uS13 of Hamiltonella defensa subsp. Acyrthosiphon pisum (strain 5AT).